Consider the following 128-residue polypeptide: Phycoerythrin alpha-3 chain, chloroplastic (128 aa).

The N-terminal 52 residues, 1–52, are a transit peptide targeting the chloroplast; that stretch reads MFAKTLASLAVIGSAAAYVPMMSMDMGRREVVQAGAAAAAVTPFLSGAPAGA. 5-hydroxylysine is present on lysine 56. The disordered stretch occupies residues 70-89; that stretch reads GCSRAPKESTGGKAGGQDDE. 15,16-dihydrobiliverdin-binding positions include cysteine 71, arginine 73, 77–78, and lysine 93; that span reads ES.

Belongs to the phycoerythrin family. Heterotetramer of 2 different alpha chains and 2 identical beta chains. The subunit composition could comprise of any combination of 2 out of 4 different alpha units with an invariant beta unit. In terms of processing, contains one covalently linked 15,16-dihydrobiliverdin chromophore.

It localises to the plastid. The protein localises to the chloroplast thylakoid membrane. Light-harvesting photosynthetic tetrapyrrole chromophore-protein from the phycobiliprotein complex. This Rhodomonas sp. (strain CS 24) (Chroomonas sp. (strain CS24)) protein is Phycoerythrin alpha-3 chain, chloroplastic (cpeA3).